The following is a 436-amino-acid chain: UDP-N-acetylmuramate--L-alanine ligase (436 aa).

Residue 108–114 (GAHGKTS) coordinates ATP.

The protein belongs to the MurCDEF family.

It is found in the cytoplasm. The catalysed reaction is UDP-N-acetyl-alpha-D-muramate + L-alanine + ATP = UDP-N-acetyl-alpha-D-muramoyl-L-alanine + ADP + phosphate + H(+). The protein operates within cell wall biogenesis; peptidoglycan biosynthesis. Its function is as follows. Cell wall formation. The sequence is that of UDP-N-acetylmuramate--L-alanine ligase from Bacillus cereus (strain G9842).